Consider the following 142-residue polypeptide: Putative pre-16S rRNA nuclease (142 aa).

The protein belongs to the YqgF nuclease family.

Its subcellular location is the cytoplasm. In terms of biological role, could be a nuclease involved in processing of the 5'-end of pre-16S rRNA. This chain is Putative pre-16S rRNA nuclease, found in Staphylococcus epidermidis (strain ATCC 35984 / DSM 28319 / BCRC 17069 / CCUG 31568 / BM 3577 / RP62A).